Here is a 262-residue protein sequence, read N- to C-terminus: MRIALCIEYDGASYHGWQSQKDVTSVQEELEKALMVVANEPIEVMCAGRTDAGVHGTGQVVHFDTNSVRKLPVWMVGVNANLPKNIAVRWVKEVNEDFHARFTATARRYRYIIFNNRQRPAIFSHGVSHYHETLDADLMHEAGQYLLGENDFTSFRAVRCQSRTPWRNLIHLKVTRHGDFIVIDIKANAFVHHMVRNITGSLIEVGRGKQKPEWVQWLLEAKDRKLAGATAKAEGLYLIDVDYPKEWDLPRVPLGPLFLPDN.

Asp-51 acts as the Nucleophile in catalysis. Tyr-109 serves as a coordination point for substrate.

This sequence belongs to the tRNA pseudouridine synthase TruA family. Homodimer.

The catalysed reaction is uridine(38/39/40) in tRNA = pseudouridine(38/39/40) in tRNA. Functionally, formation of pseudouridine at positions 38, 39 and 40 in the anticodon stem and loop of transfer RNAs. In Aliivibrio salmonicida (strain LFI1238) (Vibrio salmonicida (strain LFI1238)), this protein is tRNA pseudouridine synthase A.